Consider the following 335-residue polypeptide: Ornithine carbamoyltransferase (335 aa).

Carbamoyl phosphate contacts are provided by residues 56-59 (STRT), Q83, R107, and 134-137 (HPTQ). Residues N168, D232, and 236–237 (SM) contribute to the L-ornithine site. Carbamoyl phosphate contacts are provided by residues 274-275 (CL) and R320.

It belongs to the aspartate/ornithine carbamoyltransferase superfamily. OTCase family.

The protein resides in the cytoplasm. It carries out the reaction carbamoyl phosphate + L-ornithine = L-citrulline + phosphate + H(+). It participates in amino-acid biosynthesis; L-arginine biosynthesis; L-arginine from L-ornithine and carbamoyl phosphate: step 1/3. Functionally, reversibly catalyzes the transfer of the carbamoyl group from carbamoyl phosphate (CP) to the N(epsilon) atom of ornithine (ORN) to produce L-citrulline. In Yersinia pestis bv. Antiqua (strain Nepal516), this protein is Ornithine carbamoyltransferase.